Reading from the N-terminus, the 270-residue chain is Cbp/p300-interacting transactivator 2 (270 aa).

Positions 138–201 (LHPAAGHQMN…SGGGSGSGNM (64 aa)) are disordered. Gly residues predominate over residues 165-198 (STPGGSGGSSTPGGSGSSSGGGAGSSNSGGGSGS).

Belongs to the CITED family. In terms of assembly, interacts (via C-terminus) with SMAD2. Interacts (via C-terminus) with SMAD3 (via MH2 domain). Interacts with LHX2 (via LIM domains). Interacts with WT1. Interacts (via C-terminus) with EP300 (via CH1 domain); the interaction is stimulated in response to hypoxia. Interacts with PPARA. Interacts (via C-terminus) with TFAP2A, TFAP2B and TFAP2C.

It localises to the nucleus. Transcriptional coactivator of the p300/CBP-mediated transcription complex. Acts as a bridge, linking TFAP2 transcription factors and the p300/CBP transcriptional coactivator complex in order to stimulate TFAP2-mediated transcriptional activation. Positively regulates TGF-beta signaling through its association with the SMAD/p300/CBP-mediated transcriptional coactivator complex. Stimulates the peroxisome proliferator-activated receptors PPARA transcriptional activity. Enhances estrogen-dependent transactivation mediated by estrogen receptors. Also acts as a transcriptional corepressor; interferes with the binding of the transcription factors HIF1A or STAT2 and the p300/CBP transcriptional coactivator complex. Participates in sex determination and early gonad development by stimulating transcription activation of SRY. Plays a role in controlling left-right patterning during embryogenesis; potentiates transcriptional activation of NODAL-mediated gene transcription in the left lateral plate mesoderm (LPM). Plays an essential role in differentiation of the adrenal cortex from the adrenogonadal primordium (AGP); stimulates WT1-mediated transcription activation thereby up-regulating the nuclear hormone receptor NR5A1 promoter activity. Associates with chromatin to the PITX2 P1 promoter region. This Homo sapiens (Human) protein is Cbp/p300-interacting transactivator 2 (CITED2).